The following is a 22-amino-acid chain: VIGVXVPLFKGKSQLLDPTXXG.

The protein is Unknown protein 20 from 2D-PAGE of Bombyx mori (Silk moth).